Consider the following 492-residue polypeptide: Bifunctional shikimate kinase/3-dehydroquinate synthase (492 aa).

The interval 1-161 (MRIFLVGMMG…TALVVLEALD (161 aa)) is shikimate kinase. 10–15 (GSGKST) is an ATP binding site. Ser-14 lines the Mg(2+) pocket. Substrate contacts are provided by Asp-32, Arg-56, and Gly-78. Arg-114 is a binding site for ATP. Substrate is bound at residue Arg-131. Residues 162–492 (EKEISTIEKP…DPLELLEVVD (331 aa)) form a 3-dehydroquinate synthase region.

It in the N-terminal section; belongs to the shikimate kinase family. This sequence in the C-terminal section; belongs to the sugar phosphate cyclases superfamily. Dehydroquinate synthase family. It depends on Mg(2+) as a cofactor. NAD(+) serves as cofactor. Requires a divalent metal cation as cofactor.

Its subcellular location is the cytoplasm. The enzyme catalyses 7-phospho-2-dehydro-3-deoxy-D-arabino-heptonate = 3-dehydroquinate + phosphate. It catalyses the reaction shikimate + ATP = 3-phosphoshikimate + ADP + H(+). It functions in the pathway metabolic intermediate biosynthesis; chorismate biosynthesis; chorismate from D-erythrose 4-phosphate and phosphoenolpyruvate: step 2/7. The protein operates within metabolic intermediate biosynthesis; chorismate biosynthesis; chorismate from D-erythrose 4-phosphate and phosphoenolpyruvate: step 5/7. Functionally, catalyzes the specific phosphorylation of the 3-hydroxyl group of shikimic acid using ATP as a cosubstrate. This chain is Bifunctional shikimate kinase/3-dehydroquinate synthase (aroKB), found in Thermotoga maritima (strain ATCC 43589 / DSM 3109 / JCM 10099 / NBRC 100826 / MSB8).